The chain runs to 152 residues: Transcriptional repressor NrdR (152 aa).

The segment at 3–34 (CAFCGNPDTQVIDSRVSEDGSSIRRRRRCPAC) is a zinc-finger region. The ATP-cone domain occupies 49 to 139 (PQVVKTAGHR…VYRSFQDISE (91 aa)).

It belongs to the NrdR family. The cofactor is Zn(2+).

In terms of biological role, negatively regulates transcription of bacterial ribonucleotide reductase nrd genes and operons by binding to NrdR-boxes. The polypeptide is Transcriptional repressor NrdR (Chromobacterium violaceum (strain ATCC 12472 / DSM 30191 / JCM 1249 / CCUG 213 / NBRC 12614 / NCIMB 9131 / NCTC 9757 / MK)).